The chain runs to 1023 residues: StAR-related lipid transfer protein 8 (1023 aa).

Disordered stretches follow at residues 46-67 and 82-161; these read PMGS…SSCE and TVSL…KVSK. Positions 99 to 114 are enriched in polar residues; sequence PSSSDRPLLSPTQGQE. Ser-108 is subject to Phosphoserine. Basic residues predominate over residues 120–130; sequence AKKRHRNRSFL. Residues 143–161 show a composition bias toward polar residues; it reads GSQQAEPKHSPATSEKVSK. Arg-169 is modified (asymmetric dimethylarginine). Phosphoserine occurs at positions 235 and 238. Over residues 387 to 397 the composition is skewed to low complexity; it reads PAQAPAEAEPV. 2 disordered regions span residues 387–461 and 467–486; these read PAQA…MNEA and LAGL…VGAS. The segment covering 441–459 has biased composition (polar residues); sequence ISDTVASSSELDSSGNSMN. 2 positions are modified to phosphoserine: Ser-498 and Ser-506. Positions 573–777 constitute a Rho-GAP domain; it reads PPLIHVQRTG…HMISDCKKLF (205 aa). The disordered stretch occupies residues 733 to 757; it reads KKDSPSPRIKSKRSLIGRPGPRDLS. Positions 809 to 1017 constitute an START domain; that stretch reads AQAAGVSLSL…RDSFPTLQAA (209 aa).

As to quaternary structure, binds both the SH2 and PTB domains of TNS1. In terms of tissue distribution, widely expressed with highest levels in kidney, lung and placenta.

Its subcellular location is the cell junction. It is found in the focal adhesion. Accelerates GTPase activity of RHOA and CDC42, but not RAC1. Stimulates the hydrolysis of phosphatidylinositol 4,5-bisphosphate by PLCD1. The polypeptide is StAR-related lipid transfer protein 8 (STARD8) (Homo sapiens (Human)).